A 289-amino-acid chain; its full sequence is RNA-binding protein CP29B, chloroplastic (289 aa).

The transit peptide at Met1 to Asn62 directs the protein to the chloroplast. Phosphoserine occurs at positions 6 and 12. The residue at position 63 (Val63) is an N-acetylvaline. One can recognise an RRM 1 domain in the interval Leu91 to Pro169. Residues Asp158 to Gly199 form a disordered region. The interval Pro170–Gly203 is linker (Gly-rich). The segment covering Ser178–Ser187 has biased composition (low complexity). Positions Ser188 to Gly199 are enriched in gly residues. The region spanning Asn204–Ala282 is the RRM 2 domain.

In terms of processing, ADP-ribosylated by the Pseudomonas syringae type III effector HopU1. ADP-ribosylation reduces the ability of the protein to bind RNA. Post-translationally, phosphorylated on tyrosine residues after treatment with abscisic acid (ABA). Phosphorylation may reduce the ability of the protein to bind RNA.

The protein localises to the plastid. The protein resides in the chloroplast. Could be involved in splicing and/or processing of chloroplast RNA's. In Arabidopsis thaliana (Mouse-ear cress), this protein is RNA-binding protein CP29B, chloroplastic.